The following is a 955-amino-acid chain: UvrABC system protein A (955 aa).

Residue 35–42 (GLSGSGKS) participates in ATP binding. 2 consecutive ABC transporter domains span residues 322–601 (WGST…EESI) and 621–951 (GHDN…RYLK). 654–661 (GVSGSGKS) is a binding site for ATP. Residues 754-780 (CEACQGDGLIKIEMHFLPDVYVKCDIC) form a C4-type zinc finger.

It belongs to the ABC transporter superfamily. UvrA family. In terms of assembly, forms a heterotetramer with UvrB during the search for lesions.

The protein resides in the cytoplasm. Functionally, the UvrABC repair system catalyzes the recognition and processing of DNA lesions. UvrA is an ATPase and a DNA-binding protein. A damage recognition complex composed of 2 UvrA and 2 UvrB subunits scans DNA for abnormalities. When the presence of a lesion has been verified by UvrB, the UvrA molecules dissociate. The protein is UvrABC system protein A of Rickettsia conorii (strain ATCC VR-613 / Malish 7).